The following is a 314-amino-acid chain: Mitotic checkpoint protein BUB3.3 (314 aa).

WD repeat units follow at residues 11–50 (PIED…LSLE), 52–90 (NSQA…VDTI), 92–131 (RHDD…SLVF), 134–173 (DAGG…QSYA), 176–215 (VEVP…SEIK), 229–269 (LDGV…RLNE), and 272–311 (RYSN…QVFI).

This sequence belongs to the WD repeat BUB3 family. In terms of assembly, part of the mitotic checkpoint complex (MCC).

The protein localises to the nucleus. Its subcellular location is the chromosome. It localises to the centromere. The protein resides in the kinetochore. It is found in the cytoplasm. The protein localises to the cytoskeleton. Its subcellular location is the phragmoplast. It localises to the spindle. Its function is as follows. Has a dual function in spindle-assembly checkpoint signaling and in promoting the establishment of correct kinetochore-microtubule (K-MT) attachments. Promotes the formation of stable end-on bipolar attachments. Necessary for kinetochore localization of BUB1. The BUB1/BUB3 complex plays a role in the inhibition of anaphase-promoting complex or cyclosome (APC/C) when spindle-assembly checkpoint is activated and inhibits the ubiquitin ligase activity of APC/C by phosphorylating its activator CDC20. The polypeptide is Mitotic checkpoint protein BUB3.3 (BUB3.3) (Arabidopsis thaliana (Mouse-ear cress)).